The chain runs to 410 residues: Arginine deiminase (410 aa).

Residue C400 is the Amidino-cysteine intermediate of the active site.

It belongs to the arginine deiminase family.

The protein resides in the cytoplasm. The catalysed reaction is L-arginine + H2O = L-citrulline + NH4(+). It participates in amino-acid degradation; L-arginine degradation via ADI pathway; carbamoyl phosphate from L-arginine: step 1/2. The protein is Arginine deiminase (arcA) of Borreliella burgdorferi (strain ATCC 35210 / DSM 4680 / CIP 102532 / B31) (Borrelia burgdorferi).